Here is a 514-residue protein sequence, read N- to C-terminus: uncharacterized protein (514 aa).

Over residues 1–15 (MSSPRGASSMSSRSP) the composition is skewed to low complexity. Positions 1-22 (MSSPRGASSMSSRSPVNLEPES) are disordered.

This is an uncharacterized protein from Ictaluridae (bullhead catfishes).